Consider the following 86-residue polypeptide: Trypsin inhibitor (86 aa).

2 disulfides stabilise this stretch: C8/C65 and C49/C58.

In terms of biological role, serine protease inhibitor which is active against trypsin. Displays strong antifungal activity against a number of phytopathogenic fungi including M.melonis, A.cucumerina, A.solani, C.glaeosporioides and P.capsici. The sequence is that of Trypsin inhibitor from Fagopyrum tataricum (Tartarian buckwheat).